A 300-amino-acid polypeptide reads, in one-letter code: Sulfate adenylyltransferase subunit 2 (300 aa).

The tract at residues 281–300 is disordered; that stretch reads RAIDRDEAGSMEKKKREGYF.

This sequence belongs to the PAPS reductase family. CysD subfamily. As to quaternary structure, heterodimer composed of CysD, the smaller subunit, and CysN.

The catalysed reaction is sulfate + ATP + H(+) = adenosine 5'-phosphosulfate + diphosphate. Its pathway is sulfur metabolism; hydrogen sulfide biosynthesis; sulfite from sulfate: step 1/3. In terms of biological role, with CysN forms the ATP sulfurylase (ATPS) that catalyzes the adenylation of sulfate producing adenosine 5'-phosphosulfate (APS) and diphosphate, the first enzymatic step in sulfur assimilation pathway. APS synthesis involves the formation of a high-energy phosphoric-sulfuric acid anhydride bond driven by GTP hydrolysis by CysN coupled to ATP hydrolysis by CysD. This chain is Sulfate adenylyltransferase subunit 2, found in Brucella canis (strain ATCC 23365 / NCTC 10854 / RM-666).